The primary structure comprises 227 residues: Cytochrome c oxidase subunit 2 (227 aa).

The Mitochondrial intermembrane segment spans residues 1-14 (MAYPFQLGLQDATS). The helical transmembrane segment at 15 to 45 (PIMEELLHFHDHTLMIVFLISSLVLYIITLM) threads the bilayer. Topologically, residues 46-59 (LTTKLTHTSTMDAQ) are mitochondrial matrix. The helical transmembrane segment at 60–87 (EVETVWTILPAIILILIALPSLRILYMM) threads the bilayer. Topologically, residues 88 to 227 (DEINNPSLTV…YFETWSAVMV (140 aa)) are mitochondrial intermembrane. The Cu cation site is built by histidine 161, cysteine 196, glutamate 198, cysteine 200, histidine 204, and methionine 207. Glutamate 198 contributes to the Mg(2+) binding site. Tyrosine 218 carries the post-translational modification Phosphotyrosine.

The protein belongs to the cytochrome c oxidase subunit 2 family. In terms of assembly, component of the cytochrome c oxidase (complex IV, CIV), a multisubunit enzyme composed of 14 subunits. The complex is composed of a catalytic core of 3 subunits MT-CO1, MT-CO2 and MT-CO3, encoded in the mitochondrial DNA, and 11 supernumerary subunits COX4I, COX5A, COX5B, COX6A, COX6B, COX6C, COX7A, COX7B, COX7C, COX8 and NDUFA4, which are encoded in the nuclear genome. The complex exists as a monomer or a dimer and forms supercomplexes (SCs) in the inner mitochondrial membrane with NADH-ubiquinone oxidoreductase (complex I, CI) and ubiquinol-cytochrome c oxidoreductase (cytochrome b-c1 complex, complex III, CIII), resulting in different assemblies (supercomplex SCI(1)III(2)IV(1) and megacomplex MCI(2)III(2)IV(2)). Found in a complex with TMEM177, COA6, COX18, COX20, SCO1 and SCO2. Interacts with TMEM177 in a COX20-dependent manner. Interacts with COX20. Interacts with COX16. Requires Cu cation as cofactor.

The protein localises to the mitochondrion inner membrane. The catalysed reaction is 4 Fe(II)-[cytochrome c] + O2 + 8 H(+)(in) = 4 Fe(III)-[cytochrome c] + 2 H2O + 4 H(+)(out). Functionally, component of the cytochrome c oxidase, the last enzyme in the mitochondrial electron transport chain which drives oxidative phosphorylation. The respiratory chain contains 3 multisubunit complexes succinate dehydrogenase (complex II, CII), ubiquinol-cytochrome c oxidoreductase (cytochrome b-c1 complex, complex III, CIII) and cytochrome c oxidase (complex IV, CIV), that cooperate to transfer electrons derived from NADH and succinate to molecular oxygen, creating an electrochemical gradient over the inner membrane that drives transmembrane transport and the ATP synthase. Cytochrome c oxidase is the component of the respiratory chain that catalyzes the reduction of oxygen to water. Electrons originating from reduced cytochrome c in the intermembrane space (IMS) are transferred via the dinuclear copper A center (CU(A)) of subunit 2 and heme A of subunit 1 to the active site in subunit 1, a binuclear center (BNC) formed by heme A3 and copper B (CU(B)). The BNC reduces molecular oxygen to 2 water molecules using 4 electrons from cytochrome c in the IMS and 4 protons from the mitochondrial matrix. This chain is Cytochrome c oxidase subunit 2 (MT-CO2), found in Vulpes vulpes (Red fox).